Here is a 762-residue protein sequence, read N- to C-terminus: Polymeric immunoglobulin receptor (762 aa).

The first 18 residues, 1–18 (MTLFFLTCLLAVFPVVSM), serve as a signal peptide directing secretion. The region spanning 19-120 (KSPIFGPPEI…GVGINNRGLS (102 aa)) is the Ig-like V-type 1; required for binding to polymeric IgA and IgM domain. Residues 19 to 636 (KSPIFGPPEI…SSAGQGGSSK (618 aa)) lie on the Extracellular side of the membrane. Disulfide bonds link cysteine 40-cysteine 110 and cysteine 56-cysteine 64. N-linked (GlcNAc...) asparagine glycans are attached at residues asparagine 83 and asparagine 135. Ig-like V-type domains lie at 145–238 (GGKV…DLHV), 251–351 (GSSV…ETTF), 363–460 (GGSV…LKIV), and 464–563 (PNLK…VYVA). 8 disulfides stabilise this stretch: cysteine 152/cysteine 221, cysteine 258/cysteine 324, cysteine 272/cysteine 280, cysteine 370/cysteine 443, cysteine 384/cysteine 394, cysteine 484/cysteine 546, cysteine 488/cysteine 522, and cysteine 498/cysteine 505. Asparagine 291 carries N-linked (GlcNAc...) asparagine glycosylation. N-linked (GlcNAc...) asparagine glycosylation occurs at asparagine 423. N-linked (GlcNAc...) asparagine glycosylation is present at asparagine 530. Residues 604–634 (FVDTQAKDPEDAAGGSIASADPGSSAGQGGS) are disordered. A helical membrane pass occupies residues 637–659 (VVVSTLVPLALVLALGVLVVGVL). At 660 to 762 (RARHRKNVDR…ANIQDGPSKA (103 aa)) the chain is on the cytoplasmic side.

In terms of assembly, interacts (mainly via CDR1-like domain) with dimeric IgA. Interacts (mainly via CDR2-like domain) with pentameric IgM. As to quaternary structure, either free or part of the secretory IgA (sIgA) complex that consists of two, four or five IgA monomers, and two additional non-Ig polypeptides, namely the JCHAIN and the secretory component (the proteolytic product of PIGR). Free secretory component interacts with bacterial antigens toxA of C.difficile and eae of E.coli. In terms of processing, N-glycosylated. Carries predominantly biantennary complex type glycans which are largely non-fucosylated. Sialylation with NeuAc is common, except for Asn-291 which carries exclusively high mannose glycans. N-glycans attached to Asn-83: Gal2GlcNAc2Man3GlcNAc2; Gal2GlcNAc2Man3GlcNAc2(Fuc); Gal1GlcNAc1Man4GlcNAc2(Fuc); Gal1GlcNAc1Man3GlcNAc2; Gal1GlcNAc1Man4GlcNAc2 and NeuAc1Gal2GlcNAc2Man3GlcNAc2. N-glycans attached to Asn-135: Gal2GlcNAc2Man3GlcNAc2; Gal1GlcNAc1Man3GlcNAc2 and NeuAc1Gal2GlcNAc2Man3GlcNAc2. N-glycans attached to Asn-291: Man5-8GlcNAc2. N-glycans attached to Asn-423: NeuAc1Gal2GlcNAc2Man3GlcNAc2. N-glycans attached to Asn-530: Gal2GlcNAc2Man3GlcNAc2; Gal1GlcNAc1Man3GlcNAc2 and NeuAc1Gal2GlcNAc2Man3GlcNAc2. N-glycosylation is required for anchoring IgA molecules to mucus but is not necessary for Ig binding.

It is found in the cell membrane. The protein resides in the secreted. Functionally, mediates selective transcytosis of polymeric IgA and IgM across mucosal epithelial cells. Binds polymeric IgA and IgM at the basolateral surface of epithelial cells. The complex is then transported across the cell to be secreted at the apical surface. During this process, a cleavage occurs that separates the extracellular (known as the secretory component) from the transmembrane segment. Its function is as follows. Through its N-linked glycans ensures anchoring of secretory IgA (sIgA) molecules to mucus lining the epithelial surface to neutralize extracellular pathogens. On its own (free form) may act as a non-specific microbial scavenger to prevent pathogen interaction with epithelial cells. This chain is Polymeric immunoglobulin receptor (PIGR), found in Equus asinus (Donkey).